The sequence spans 227 residues: 2-C-methyl-D-erythritol 4-phosphate cytidylyltransferase (227 aa).

It belongs to the IspD/TarI cytidylyltransferase family. IspD subfamily.

The enzyme catalyses 2-C-methyl-D-erythritol 4-phosphate + CTP + H(+) = 4-CDP-2-C-methyl-D-erythritol + diphosphate. It functions in the pathway isoprenoid biosynthesis; isopentenyl diphosphate biosynthesis via DXP pathway; isopentenyl diphosphate from 1-deoxy-D-xylulose 5-phosphate: step 2/6. Functionally, catalyzes the formation of 4-diphosphocytidyl-2-C-methyl-D-erythritol from CTP and 2-C-methyl-D-erythritol 4-phosphate (MEP). The protein is 2-C-methyl-D-erythritol 4-phosphate cytidylyltransferase of Nostoc punctiforme (strain ATCC 29133 / PCC 73102).